The sequence spans 553 residues: MNIIDQVKQTLVEEIAASINKAGLADEIPDIKIEVPKDTKNGDYATNIAMVLTKIAKRNPREIAQAIVDNLDTEKAHVKQIDIAGPGFINFYLDNQYLTAIIPEAIEKGDQFGHVNESKGQNVLLEYVSANPTGDLHIGHARNAAVGDALANILTAAGYNVTREYYINDAGNQITNLARSIETRFFEALGDNSYSMPEDGYNGKDIIEIGKDLAEKHPEIKDYSEEARLKEFRKLGVEYEMAKLKNDLAEFNTHFDNWFSETSLYEKGEILEVLAKMKELGYTYEADGATWLRTTDFKDDKDRVLIKNDGTYTYFLPDIAYHFDKVKRGNDILIDLFGADHHGYINRLKASLETFGVDSNRLEIQIMQMVRLMENGKEVKMSKRTGNAITLREIMDEVGVDAARYFLTMRSPDSHFDFDMELAKEQSQDNPVYYAQYAHARICSILKQAKEQGIEVAAANDFTTITNEKAIELLKKVADFEPTIESAAEHRSAHRITNYIQDLASHFHKFYNAEKVLTDDIEKTKAHVAMIEAVRITLKNALAMVGVSAPESM.

The short motif at 130 to 140 (ANPTGDLHIGH) is the 'HIGH' region element.

The protein belongs to the class-I aminoacyl-tRNA synthetase family. Monomer.

It localises to the cytoplasm. The enzyme catalyses tRNA(Arg) + L-arginine + ATP = L-arginyl-tRNA(Arg) + AMP + diphosphate. This Staphylococcus aureus (strain MRSA252) protein is Arginine--tRNA ligase.